The sequence spans 550 residues: Hydroxylamine reductase (550 aa).

Residues Cys-7, Cys-10, Cys-19, and Cys-25 each coordinate [4Fe-4S] cluster. Hybrid [4Fe-2O-2S] cluster contacts are provided by His-244, Glu-268, Cys-312, Cys-405, Cys-433, Cys-458, Glu-493, and Lys-495. Cys-405 is subject to Cysteine persulfide.

The protein belongs to the HCP family. [4Fe-4S] cluster serves as cofactor. Requires hybrid [4Fe-2O-2S] cluster as cofactor.

Its subcellular location is the cytoplasm. The catalysed reaction is A + NH4(+) + H2O = hydroxylamine + AH2 + H(+). In terms of biological role, catalyzes the reduction of hydroxylamine to form NH(3) and H(2)O. In Porphyromonas gingivalis (strain ATCC BAA-308 / W83), this protein is Hydroxylamine reductase.